Consider the following 337-residue polypeptide: DNA-directed RNA polymerase subunit alpha (337 aa).

The alpha N-terminal domain (alpha-NTD) stretch occupies residues 1-233 (MVREEVAGST…DLFLPFLHTE (233 aa)). Residues 267–337 (IPLNCIFIDQ…LPMDLPKNKF (71 aa)) are alpha C-terminal domain (alpha-CTD).

The protein belongs to the RNA polymerase alpha chain family. In plastids the minimal PEP RNA polymerase catalytic core is composed of four subunits: alpha, beta, beta', and beta''. When a (nuclear-encoded) sigma factor is associated with the core the holoenzyme is formed, which can initiate transcription.

The protein localises to the plastid. The protein resides in the chloroplast. It catalyses the reaction RNA(n) + a ribonucleoside 5'-triphosphate = RNA(n+1) + diphosphate. Its function is as follows. DNA-dependent RNA polymerase catalyzes the transcription of DNA into RNA using the four ribonucleoside triphosphates as substrates. The protein is DNA-directed RNA polymerase subunit alpha of Oryza nivara (Indian wild rice).